The primary structure comprises 476 residues: F-box protein At5g07670 (476 aa).

The 53-residue stretch at 59–111 (PDFTLLLPDLILIRVIQKIPNSQRKNLSLVCKRWFRLHGRLVRSFKVSDWEFL) folds into the F-box domain.

In Arabidopsis thaliana (Mouse-ear cress), this protein is F-box protein At5g07670.